The primary structure comprises 153 residues: ORM1-like protein 3 (153 aa).

Residues 1-17 are important for ceramide level-sensing; sequence MNVGTAHSEVNPNTRVM. The Cytoplasmic portion of the chain corresponds to 1 to 21; the sequence is MNVGTAHSEVNPNTRVMNSRG. 2 helical membrane passes run 22-42 and 43-63; these read IWLS…SIPF and VSVP…MYIF. Over 64-94 the chain is Cytoplasmic; it reads LHTVKGTPFETPDQGKARLLTHWEQMDYGVQ. The helical transmembrane segment at 95-117 threads the bilayer; the sequence is FTASRKFLTITPIVLYFLTSFYT. At 118–121 the chain is on the extracellular side; it reads KYDQ. Residues 122 to 142 form a helical membrane-spanning segment; it reads IHFVLNTVSLMSVLIPKLPQL. Pro137 bears the Hydroxyproline mark. At 143–153 the chain is on the cytoplasmic side; that stretch reads HGVRIFGINKY.

This sequence belongs to the ORM family. As to quaternary structure, ceramide-sensitive subunit of the serine palmitoyltransferase (SPT) complex, which is also composed of SPTLC1, SPTLC2/3 and SPTSSA/B. In terms of processing, when hydroxylated at Pro-137, ubiquitinated via 'Lys-48'-linkage, leading to proteasomal degradation. In endothelial cells, ORMDL3 proteasomal degradation is controlled by the sphingosine 1-phosphate receptor signaling pathway.

It localises to the endoplasmic reticulum membrane. Its function is as follows. Plays an essential role in the homeostatic regulation of sphingolipid de novo biosynthesis by modulating the activity of the serine palmitoyltransferase (SPT) in response to ceramide levels. When complexed to SPT, the binding of ceramides to its N-terminus stabilizes a conformation that block SPT substrate entry, hence preventing SPT catalytic activity. Through this mechanism, maintains ceramide levels at sufficient concentrations for the production of complex sphingolipids, but which prevents the accumulation of ceramides to levels that trigger apoptosis. The sequence is that of ORM1-like protein 3 (ORMDL3) from Ailuropoda melanoleuca (Giant panda).